The primary structure comprises 401 residues: Cysteine desulfurase CsdA (401 aa).

Residue Lys-222 is modified to N6-(pyridoxal phosphate)lysine. Cys-358 (cysteine persulfide intermediate) is an active-site residue.

Belongs to the class-V pyridoxal-phosphate-dependent aminotransferase family. Csd subfamily. Homodimer. Forms a heterodimer with CsdE. Requires pyridoxal 5'-phosphate as cofactor.

The enzyme catalyses (sulfur carrier)-H + L-cysteine = (sulfur carrier)-SH + L-alanine. The catalysed reaction is L-selenocysteine + AH2 = hydrogenselenide + L-alanine + A + H(+). It catalyses the reaction 3-sulfino-L-alanine + H2O = sulfite + L-alanine + H(+). Its activity is regulated as follows. Cysteine desulfurase activity is increased 2-fold in the presence of CsdE. In terms of biological role, catalyzes the removal of elemental sulfur and selenium atoms from L-cysteine, L-cystine, L-selenocysteine, and L-selenocystine to produce L-alanine, and transiently retains the released sulfur atom on a cysteine residue, in the form of a persulfide. Can also desulfinate L-cysteine sulfinate (3-sulfino-L-alanine), which is the best substrate of the enzyme. Functions as a selenium delivery protein in the pathway for the biosynthesis of selenophosphate. Seems to participate in Fe/S biogenesis by recruiting the SufBCD-SufE proteins. Transfers sulfur to CsdE that increases the cysteine desulfurase activity of CsdA. Can also transfer sulfur directly to TcdA/CsdL in vitro. Appears to support the function of TcdA in the generation of cyclic threonylcarbamoyladenosine at position 37 (ct(6)A37) in tRNAs that read codons beginning with adenine. The protein is Cysteine desulfurase CsdA (csdA) of Escherichia coli (strain K12).